The following is a 799-amino-acid chain: MSELRTLPVLPLRDIVVFPHMVVPLFVGRDKSVRALEEVMRGDKQILLVTQKNSADDDPAPGDIFEVGVLATVLQLLKLPDGTVKVLVEGKARAAVVSFTDQESYYEAQIGEVSEDDGAGPEAEALSRAVVEQFENYVKLNKKVPPEALASIPQIAEPGKLADSIAAHLSVKIGDKQNLLEIFDVVKRLEKVFALMEGEISVLQVEKKIRSRVKRQMEKTQREYYLNEQMKAIQRELGDPDDARDELIDLEKRIKKTKLSKEARTKAESELKKLRNMSPMSAESTVVRNYLDWLLSIPWGKAKTKKIDLVESEGILDADHYGLEKVKERILEYLAVQARTNSLKGPILCLVGPPGVGKTSLGKSIAKATGREFVRMSLGGVRDEAEIRGHRRTYIGSMPGKVVQSMKKAKTTNAFVLLDEIDKMGSDYRGDPASALLEVLDPSQNSTFGDHYLEVDYDLSQVMFVTTANSLNMPQPLLDRMEIIRIPGYTEDEKLEIAKRHILPKLAKDHGLKPAEFIVPDKAIRDLIRYYTREAGVRSLERELGALARKTVRDLAREKVASITIDDERLAKYAGVKKYRYGETDEVDQVGIVTGLAWTEFGGDILTIEAVKMPGKGRMQITGNLKDVMKESIAAANSYVRSRALQFGIKPPVFEKTDVHIHVPDGATPKDGPSAGIAMALAMVSVLTGIPIRKDIAMTGEITLRGRVTAIGGLKEKLLAALRSGVKTVLIPQENEKDLADVPQTVKDGLEIIPVSTVDEVLKHALTGPLTPVEWNEAEEPITTSAKKDDGDSDAMLTH.

The Lon N-terminal domain maps to 7 to 200; the sequence is LPVLPLRDIV…KVFALMEGEI (194 aa). Residue 352-359 participates in ATP binding; that stretch reads GPPGVGKT. Residues 587–768 form the Lon proteolytic domain; that stretch reads VDQVGIVTGL…DEVLKHALTG (182 aa). Active-site residues include serine 674 and lysine 717. The segment at 772–799 is disordered; that stretch reads PVEWNEAEEPITTSAKKDDGDSDAMLTH.

Belongs to the peptidase S16 family. As to quaternary structure, homohexamer. Organized in a ring with a central cavity.

It is found in the cytoplasm. The enzyme catalyses Hydrolysis of proteins in presence of ATP.. ATP-dependent serine protease that mediates the selective degradation of mutant and abnormal proteins as well as certain short-lived regulatory proteins. Required for cellular homeostasis and for survival from DNA damage and developmental changes induced by stress. Degrades polypeptides processively to yield small peptide fragments that are 5 to 10 amino acids long. Binds to DNA in a double-stranded, site-specific manner. CcrM is an important target of the Lon protease pathway in C.crescentus. The sequence is that of Lon protease from Caulobacter vibrioides (strain ATCC 19089 / CIP 103742 / CB 15) (Caulobacter crescentus).